We begin with the raw amino-acid sequence, 236 residues long: Lectin (236 aa).

An N-linked (GlcNAc...) asparagine glycan is attached at asparagine 118.

The protein belongs to the leguminous lectin family. Homodimer of noncovalently associated chains.

In terms of biological role, D-mannose and D-glucose specific lectin. This is Lectin from Onobrychis viciifolia (Common sainfoin).